A 363-amino-acid polypeptide reads, in one-letter code: Carbamoyl phosphate synthase small chain (363 aa).

Residues 1-172 (MTKRILMLED…AFASPGDGKR (172 aa)) form a CPSase region. Residues Ser46, Gly220, and Gly222 each coordinate L-glutamine. The region spanning 172 to 359 (RVVLVDYGVK…MEMMNGKEEG (188 aa)) is the Glutamine amidotransferase type-1 domain. The Nucleophile role is filled by Cys247. The L-glutamine site is built by Leu248, Gln251, Asn289, Gly291, and Tyr292. Active-site residues include His332 and Glu334.

This sequence belongs to the CarA family. Composed of two chains; the small (or glutamine) chain promotes the hydrolysis of glutamine to ammonia, which is used by the large (or ammonia) chain to synthesize carbamoyl phosphate. Tetramer of heterodimers (alpha,beta)4.

It carries out the reaction hydrogencarbonate + L-glutamine + 2 ATP + H2O = carbamoyl phosphate + L-glutamate + 2 ADP + phosphate + 2 H(+). The enzyme catalyses L-glutamine + H2O = L-glutamate + NH4(+). It functions in the pathway amino-acid biosynthesis; L-arginine biosynthesis; carbamoyl phosphate from bicarbonate: step 1/1. Its pathway is pyrimidine metabolism; UMP biosynthesis via de novo pathway; (S)-dihydroorotate from bicarbonate: step 1/3. Functionally, small subunit of the glutamine-dependent carbamoyl phosphate synthetase (CPSase). CPSase catalyzes the formation of carbamoyl phosphate from the ammonia moiety of glutamine, carbonate, and phosphate donated by ATP, constituting the first step of 2 biosynthetic pathways, one leading to arginine and/or urea and the other to pyrimidine nucleotides. The small subunit (glutamine amidotransferase) binds and cleaves glutamine to supply the large subunit with the substrate ammonia. The polypeptide is Carbamoyl phosphate synthase small chain (Listeria monocytogenes serovar 1/2a (strain ATCC BAA-679 / EGD-e)).